Here is a 278-residue protein sequence, read N- to C-terminus: Biotin synthase (278 aa).

The 227-residue stretch at 1–227 folds into the Radical SAM core domain; that stretch reads MQIMLCAISN…QSVVMVAGGR (227 aa). [4Fe-4S] cluster-binding residues include Cys-16, Cys-20, and Cys-23. Residues Cys-60, Cys-95, and Cys-153 each coordinate [2Fe-2S] cluster.

It belongs to the radical SAM superfamily. Biotin synthase family. In terms of assembly, homodimer. The cofactor is [4Fe-4S] cluster. Requires [2Fe-2S] cluster as cofactor.

It carries out the reaction (4R,5S)-dethiobiotin + (sulfur carrier)-SH + 2 reduced [2Fe-2S]-[ferredoxin] + 2 S-adenosyl-L-methionine = (sulfur carrier)-H + biotin + 2 5'-deoxyadenosine + 2 L-methionine + 2 oxidized [2Fe-2S]-[ferredoxin]. It participates in cofactor biosynthesis; biotin biosynthesis; biotin from 7,8-diaminononanoate: step 2/2. Catalyzes the conversion of dethiobiotin (DTB) to biotin by the insertion of a sulfur atom into dethiobiotin via a radical-based mechanism. This is Biotin synthase from Campylobacter jejuni (strain RM1221).